The primary structure comprises 347 residues: tRNA pseudouridine synthase D (347 aa).

D81 serves as the catalytic Nucleophile. The 148-residue stretch at 158 to 305 (GVPNYFGSQR…RHDRRDIALK (148 aa)) folds into the TRUD domain.

Belongs to the pseudouridine synthase TruD family.

It catalyses the reaction uridine(13) in tRNA = pseudouridine(13) in tRNA. Responsible for synthesis of pseudouridine from uracil-13 in transfer RNAs. The chain is tRNA pseudouridine synthase D from Vibrio campbellii (strain ATCC BAA-1116).